The following is a 408-amino-acid chain: CinA-like protein (408 aa).

The protein belongs to the CinA family.

The polypeptide is CinA-like protein (Thermotoga sp. (strain RQ2)).